Here is a 272-residue protein sequence, read N- to C-terminus: Phosphate import ATP-binding protein PstB (272 aa).

Residues 26–267 (IVVKNWNLYY…PQVKRTEDYI (242 aa)) form the ABC transporter domain. 58–65 (GPSGCGKS) contributes to the ATP binding site.

This sequence belongs to the ABC transporter superfamily. Phosphate importer (TC 3.A.1.7) family. The complex is composed of two ATP-binding proteins (PstB), two transmembrane proteins (PstC and PstA) and a solute-binding protein (PstS).

The protein resides in the cell inner membrane. It carries out the reaction phosphate(out) + ATP + H2O = ADP + 2 phosphate(in) + H(+). Part of the ABC transporter complex PstSACB involved in phosphate import. Responsible for energy coupling to the transport system. The polypeptide is Phosphate import ATP-binding protein PstB (Hydrogenovibrio crunogenus (strain DSM 25203 / XCL-2) (Thiomicrospira crunogena)).